Reading from the N-terminus, the 273-residue chain is Zinc finger protein 80 (273 aa).

2 C2H2-type zinc fingers span residues 49–71 and 77–99; these read YKCK…HQIH and YECQ…MRIH. The segment at 105–127 adopts a C2H2-type 3; atypical zinc-finger fold; sequence CKCVECGKVFNRRSHLLCYRQIH. C2H2-type zinc fingers lie at residues 133 to 155, 161 to 183, 189 to 211, and 217 to 239; these read YECS…RMTH, FGCK…MKIH, YKCG…SMTH, and YECK…TRSH.

Belongs to the krueppel C2H2-type zinc-finger protein family.

The protein resides in the nucleus. Its function is as follows. May be involved in transcriptional regulation. This is Zinc finger protein 80 (ZNF80) from Gorilla gorilla gorilla (Western lowland gorilla).